Consider the following 528-residue polypeptide: UDP-glucuronosyltransferase 2A2 (528 aa).

The N-terminal stretch at 1-21 (MIKKVLQLLIFHLTLAEIVLS) is a signal peptide. Topologically, residues 22-494 (GNVVVWPTDG…FQYHSLDVIG (473 aa)) are extracellular. Asn-48 and Asn-314 each carry an N-linked (GlcNAc...) asparagine glycan. Residues 495–515 (FLLACVASAILLVAKCCLFIF) form a helical membrane-spanning segment. The Cytoplasmic portion of the chain corresponds to 516–528 (QKVGKTGKKKKRD).

Belongs to the UDP-glycosyltransferase family.

It is found in the membrane. The catalysed reaction is glucuronate acceptor + UDP-alpha-D-glucuronate = acceptor beta-D-glucuronoside + UDP + H(+). The enzyme catalyses 17alpha-estradiol + UDP-alpha-D-glucuronate = 17alpha-estradiol 3-O-(beta-D-glucuronate) + UDP + H(+). It carries out the reaction 17beta-estradiol + UDP-alpha-D-glucuronate = 17beta-estradiol 3-O-(beta-D-glucuronate) + UDP + H(+). It catalyses the reaction chenodeoxycholate + UDP-alpha-D-glucuronate = chenodeoxycholoyl-24-O-(beta-D-glucuronate) + UDP. The catalysed reaction is lithocholate + UDP-alpha-D-glucuronate = lithocholoyl-24-O-(beta-D-glucuronate) + UDP. The enzyme catalyses deoxycholate + UDP-alpha-D-glucuronate = deoxycholoyl-24-O-(beta-D-glucuronate) + UDP. It carries out the reaction hyocholate + UDP-alpha-D-glucuronate = hyocholoyl-24-O-(beta-D-glucuronate) + UDP. It catalyses the reaction hyodeoxycholate + UDP-alpha-D-glucuronate = hyodeoxycholate 6-O-(beta-D-glucuronate) + UDP + H(+). Its function is as follows. UDP-glucuronosyltransferase (UGT) that catalyzes phase II biotransformation reactions in which lipophilic substrates are conjugated with glucuronic acid to increase the metabolite's water solubility, thereby facilitating excretion into either the urine or bile. Essential for the elimination and detoxification of drugs, xenobiotics and endogenous compounds. Catalyzes the glucuronidation of endogenous estrogen hormone estradiol. Contributes to bile acid (BA) detoxification by catalyzing the glucuronidation of BA substrates, which are natural detergents for dietary lipids absorption. Potential role in detoxification of toxic waste compounds in the amniotic fluid before birth, and air-born chemical after birth. The polypeptide is UDP-glucuronosyltransferase 2A2 (Mus musculus (Mouse)).